Here is a 1094-residue protein sequence, read N- to C-terminus: Protein transport protein Sec24C (1094 aa).

The segment at 1–338 is disordered; sequence MNVNQSVPPV…PIQVIEDDRN (338 aa). The segment covering 8-19 has biased composition (pro residues); that stretch reads PPVPPFGQPQPI. 2 stretches are compositionally biased toward low complexity: residues 20-29 and 60-77; these read YPGYHQSSYG and SRAPPSSGAPPASTAQAP. The span at 90-101 shows a compositional bias: polar residues; that stretch reads DVQNGPSSTVQM. Residues 123 to 132 show a composition bias toward pro residues; the sequence is VLQPYGPPPT. Polar residues-rich tracts occupy residues 133-144, 165-175, 189-215, and 240-251; these read SAQVATQLSGMQ, SLASASGSFPN, PLSQAQGHPGIQTPQRSAPSQASSFTP, and SVSQPNHVSSPP. The residue at position 214 (Thr-214) is a Phosphothreonine. Over residues 273–282 the composition is skewed to low complexity; that stretch reads PQQPGYQPQQ. Zn(2+)-binding residues include Cys-425, Cys-428, Cys-447, and Cys-450. The interval 425 to 450 is zinc finger-like; it reads CNRCKAYMCPFMQFIEGGRRFQCCFC. The Gelsolin-like repeat unit spans residues 962–1034; that stretch reads TTEPPAVRAS…DNPLSKKVRG (73 aa).

It belongs to the SEC23/SEC24 family. SEC24 subfamily. In terms of assembly, COPII is composed of at least five proteins: the Sec23/24 complex, the Sec13/31 complex and Sar1. Interacts with TMED2 and TMED10. Interacts with GOSR2 (via IxM motif) and STX5 (via IxM motif); recruits GOSR2 and STX5 into COPII-coated vesicles. Interacts with DDHD1. Interacts with STING1; promoting STING1 translocation to the COPII vesicles. As to expression, ubiquitous.

It localises to the cytoplasmic vesicle. The protein localises to the COPII-coated vesicle membrane. The protein resides in the endoplasmic reticulum membrane. Its subcellular location is the cytoplasm. It is found in the cytosol. Component of the coat protein complex II (COPII) which promotes the formation of transport vesicles from the endoplasmic reticulum (ER). The coat has two main functions, the physical deformation of the endoplasmic reticulum membrane into vesicles and the selection of cargo molecules for their transport to the Golgi complex. Plays a central role in cargo selection within the COPII complex and together with SEC24D may have a different specificity compared to SEC24A and SEC24B. May more specifically package GPI-anchored proteins through the cargo receptor TMED10. May also be specific for IxM motif-containing cargos like the SNAREs GOSR2 and STX5. The polypeptide is Protein transport protein Sec24C (Homo sapiens (Human)).